A 185-amino-acid chain; its full sequence is Elongation factor P (185 aa).

This sequence belongs to the elongation factor P family.

The protein localises to the cytoplasm. Its pathway is protein biosynthesis; polypeptide chain elongation. Its function is as follows. Involved in peptide bond synthesis. Stimulates efficient translation and peptide-bond synthesis on native or reconstituted 70S ribosomes in vitro. Probably functions indirectly by altering the affinity of the ribosome for aminoacyl-tRNA, thus increasing their reactivity as acceptors for peptidyl transferase. The protein is Elongation factor P of Azoarcus sp. (strain BH72).